A 474-amino-acid chain; its full sequence is MFS transporter SAT21 (474 aa).

6 helical membrane passes run 7 to 27 (LVLP…LEVP), 64 to 84 (LVVG…ILYF), 101 to 121 (CVGY…HQVF), 131 to 151 (LFLF…AFVA), 162 to 182 (FLFL…ALAT), and 189 to 209 (LFLP…LLQM). Positions 220 to 252 (KVVGSTSDQTEPFLRSSSNSSQESGTAAPAIDP) are disordered. Over residues 222-244 (VGSTSDQTEPFLRSSSNSSQESG) the composition is skewed to polar residues. Asn-238 carries an N-linked (GlcNAc...) asparagine glycan. The next 6 membrane-spanning stretches (helical) occupy residues 276 to 296 (FICY…AFIF), 315 to 335 (LALS…ANAT), 346 to 366 (INIG…IMAW), 374 to 394 (FIFS…LQGV), 406 to 426 (SIFA…GPLM), and 445 to 465 (FLAS…LWAL).

Belongs to the major facilitator superfamily.

It is found in the cell membrane. Functionally, MFS transporter; part of the satratoxin SC3 cluster involved in the biosynthesis of satratoxins, trichothecene mycotoxins that are associated with human food poisonings. Satratoxins are suggested to be made by products of multiple gene clusters (SC1, SC2 and SC3) that encode 21 proteins in all, including polyketide synthases, acetyltransferases, and other enzymes expected to modify the trichothecene skeleton. SC1 encodes 10 proteins, SAT1 to SAT10. The largest are SAT8, which encodes a putative polyketide synthase (PKS) with a conventional non-reducing architecture, and SAT10, a putative protein containing four ankyrin repeats and thus may be involved in protein scaffolding. The putative short-chain reductase SAT3 may assist the PKS in some capacity. SAT6 contains a secretory lipase domain and acts probably as a trichothecene esterase. SAT5 encodes a putative acetyltransferase, and so, with SAT6, may affect endogenous protection from toxicity. The probable transcription factor SAT9 may regulate the expression of the SC1 cluster. SC2 encodes proteins SAT11 to SAT16, the largest of which encodes the putative reducing PKS SAT13. SAT11 is a cytochrome P450 monooxygenase, while SAT14 and SAT16 are probable acetyltransferases. The SC2 cluster may be regulated by the transcription factor SAT15. SC3 is a small cluster that encodes 5 proteins, SAT17 to SAT21. SAT21 is a putative MFS-type transporter which may have a role in exporting secondary metabolites. The four other proteins putatively encoded in SC3 include the taurine hydroxylase-like protein SAT17, the O-methyltransferase SAT18, the acetyltransferase SAT19, and the Cys6-type zinc finger SAT20, the latter being probably involved in regulation of SC3 expression. This Stachybotrys chartarum (strain CBS 109288 / IBT 7711) (Toxic black mold) protein is MFS transporter SAT21.